A 211-amino-acid chain; its full sequence is Thiamine-phosphate synthase (211 aa).

Residues 37 to 41 (QLRIK) and N69 each bind 4-amino-2-methyl-5-(diphosphooxymethyl)pyrimidine. Mg(2+) is bound by residues D70 and D89. S108 provides a ligand contact to 4-amino-2-methyl-5-(diphosphooxymethyl)pyrimidine. 134–136 (TQT) provides a ligand contact to 2-[(2R,5Z)-2-carboxy-4-methylthiazol-5(2H)-ylidene]ethyl phosphate. Position 137 (K137) interacts with 4-amino-2-methyl-5-(diphosphooxymethyl)pyrimidine. 2-[(2R,5Z)-2-carboxy-4-methylthiazol-5(2H)-ylidene]ethyl phosphate-binding positions include G166 and 186–187 (VS).

The protein belongs to the thiamine-phosphate synthase family. The cofactor is Mg(2+).

The enzyme catalyses 2-[(2R,5Z)-2-carboxy-4-methylthiazol-5(2H)-ylidene]ethyl phosphate + 4-amino-2-methyl-5-(diphosphooxymethyl)pyrimidine + 2 H(+) = thiamine phosphate + CO2 + diphosphate. It carries out the reaction 2-(2-carboxy-4-methylthiazol-5-yl)ethyl phosphate + 4-amino-2-methyl-5-(diphosphooxymethyl)pyrimidine + 2 H(+) = thiamine phosphate + CO2 + diphosphate. The catalysed reaction is 4-methyl-5-(2-phosphooxyethyl)-thiazole + 4-amino-2-methyl-5-(diphosphooxymethyl)pyrimidine + H(+) = thiamine phosphate + diphosphate. It participates in cofactor biosynthesis; thiamine diphosphate biosynthesis; thiamine phosphate from 4-amino-2-methyl-5-diphosphomethylpyrimidine and 4-methyl-5-(2-phosphoethyl)-thiazole: step 1/1. Condenses 4-methyl-5-(beta-hydroxyethyl)thiazole monophosphate (THZ-P) and 2-methyl-4-amino-5-hydroxymethyl pyrimidine pyrophosphate (HMP-PP) to form thiamine monophosphate (TMP). This Escherichia coli O1:K1 / APEC protein is Thiamine-phosphate synthase.